A 345-amino-acid chain; its full sequence is Protein RecA (345 aa).

66-73 (GPESSGKT) contacts ATP.

This sequence belongs to the RecA family.

The protein localises to the cytoplasm. Functionally, can catalyze the hydrolysis of ATP in the presence of single-stranded DNA, the ATP-dependent uptake of single-stranded DNA by duplex DNA, and the ATP-dependent hybridization of homologous single-stranded DNAs. It interacts with LexA causing its activation and leading to its autocatalytic cleavage. The polypeptide is Protein RecA (Acidithiobacillus ferrooxidans (strain ATCC 23270 / DSM 14882 / CIP 104768 / NCIMB 8455) (Ferrobacillus ferrooxidans (strain ATCC 23270))).